The primary structure comprises 243 residues: TIGR03089 family protein (243 aa).

It belongs to the TIGR03089 family.

The sequence is that of TIGR03089 family protein from Mycobacterium tuberculosis (strain ATCC 25618 / H37Rv).